A 453-amino-acid polypeptide reads, in one-letter code: tRNA modification GTPase MnmE (453 aa).

Positions 22, 79, and 119 each coordinate (6S)-5-formyl-5,6,7,8-tetrahydrofolate. The region spanning 215–376 (GMKVVIAGRP…LKQHLKSLMG (162 aa)) is the TrmE-type G domain. Position 225 (N225) interacts with K(+). GTP-binding positions include 225–230 (NAGKSS), 244–250 (TEIAGTT), 269–272 (DTAG), and 334–337 (NKAD). S229 is a binding site for Mg(2+). K(+)-binding residues include T244, I246, and T249. Mg(2+) is bound at residue T250. K453 contacts (6S)-5-formyl-5,6,7,8-tetrahydrofolate.

Belongs to the TRAFAC class TrmE-Era-EngA-EngB-Septin-like GTPase superfamily. TrmE GTPase family. As to quaternary structure, homodimer. Heterotetramer of two MnmE and two MnmG subunits. K(+) is required as a cofactor.

It is found in the cytoplasm. Its function is as follows. Exhibits a very high intrinsic GTPase hydrolysis rate. Involved in the addition of a carboxymethylaminomethyl (cmnm) group at the wobble position (U34) of certain tRNAs, forming tRNA-cmnm(5)s(2)U34. This is tRNA modification GTPase MnmE from Shewanella pealeana (strain ATCC 700345 / ANG-SQ1).